The primary structure comprises 829 residues: E3 ubiquitin-protein ligase Jade-2 (829 aa).

Positions 1 to 52 (MEEKRRKYSISSDNSDTTDGHVTSTSASRCSKLPSSTKSGWPRQNEKKPSEV) are disordered. A phosphoserine mark is found at S9 and S15. Positions 9 to 39 (SISSDNSDTTDGHVTSTSASRCSKLPSSTKS) are enriched in polar residues. N6-acetyllysine is present on residues K32 and K38. Position 117 is a phosphoserine (S117). Residues 199–249 (DVVCDVCRSPEGEDGNEMVFCDKCNVCVHQACYGILKVPTGSWLCRTCALG) form a PHD-type 1 zinc finger. The C2HC pre-PHD-type zinc finger occupies 251–285 (QPKCLLCPKRGGALKPTRSGTKWVHVSCALWIPEV). An N6-acetyllysine modification is found at K298. The segment at 309-365 (LSCSLCKECTGTCIQCSMPSCITAFHVTCAFDRGLEMRTILADNDEVKFKSLCQEHS) adopts a PHD-type 2 zinc-finger fold. Disordered stretches follow at residues 362 to 383 (QEHSDGGPRSEPTSEPVEPSQA), 517 to 555 (REPSGRRSKGKKNDSKRKGREGPKGSSPEKKEKVKAGPE), and 622 to 817 (SFMR…REAG). A compositionally biased stretch (basic residues) spans 522-535 (RRSKGKKNDSKRKG). Over residues 536 to 552 (REGPKGSSPEKKEKVKA) the composition is skewed to basic and acidic residues. Over residues 637–650 (KARGRTRLPAKKKP) the composition is skewed to basic residues. Residues 776 to 786 (ERPKVSLHFDT) are compositionally biased toward basic and acidic residues. The span at 792–806 (FSDEEMSDSEVEAED) shows a compositional bias: acidic residues.

The protein belongs to the JADE family. Component of the HBO1 complex composed at least of ING4 or ING5, MYST2/HBO1, MEAF6, and one of JADE1, JADE2 and JADE3. Interacts (via C-terminus) with KDM1A (via AOD/Tower domain).

It carries out the reaction S-ubiquitinyl-[E2 ubiquitin-conjugating enzyme]-L-cysteine + [acceptor protein]-L-lysine = [E2 ubiquitin-conjugating enzyme]-L-cysteine + N(6)-ubiquitinyl-[acceptor protein]-L-lysine.. Its pathway is protein modification; protein ubiquitination. Functionally, scaffold subunit of some HBO1 complexes, which have a histone H4 acetyltransferase activity. Acts as a E3 ubiquitin-protein ligase mediating the ubiquitination and subsequent proteasomal degradation of target protein histone demethylase KDM1A. Also acts as a ubiquitin ligase E3 toward itself. Positive regulator of neurogenesis. This Mus musculus (Mouse) protein is E3 ubiquitin-protein ligase Jade-2 (Jade2).